The chain runs to 454 residues: Bifunctional protein GlmU (454 aa).

Positions 1–226 (MALNVVILAA…AIEVEGANNR (226 aa)) are pyrophosphorylase. UDP-N-acetyl-alpha-D-glucosamine is bound by residues 8-11 (LAAG), lysine 22, glutamine 73, 78-79 (GT), 100-102 (YGD), glycine 137, glutamate 151, asparagine 166, and asparagine 224. Aspartate 102 provides a ligand contact to Mg(2+). Asparagine 224 contributes to the Mg(2+) binding site. The interval 227–247 (VQLAQLERAYQAREAEKLMIA) is linker. The tract at residues 248-454 (GANLRDPSRI…GWQRPVKIKK (207 aa)) is N-acetyltransferase. Residues arginine 330 and lysine 348 each coordinate UDP-N-acetyl-alpha-D-glucosamine. The active-site Proton acceptor is the histidine 360. UDP-N-acetyl-alpha-D-glucosamine contacts are provided by tyrosine 363 and asparagine 374. Acetyl-CoA contacts are provided by residues alanine 377, 383-384 (NY), serine 402, alanine 420, and arginine 437.

It in the N-terminal section; belongs to the N-acetylglucosamine-1-phosphate uridyltransferase family. This sequence in the C-terminal section; belongs to the transferase hexapeptide repeat family. Homotrimer. Requires Mg(2+) as cofactor.

The protein localises to the cytoplasm. It carries out the reaction alpha-D-glucosamine 1-phosphate + acetyl-CoA = N-acetyl-alpha-D-glucosamine 1-phosphate + CoA + H(+). The enzyme catalyses N-acetyl-alpha-D-glucosamine 1-phosphate + UTP + H(+) = UDP-N-acetyl-alpha-D-glucosamine + diphosphate. It functions in the pathway nucleotide-sugar biosynthesis; UDP-N-acetyl-alpha-D-glucosamine biosynthesis; N-acetyl-alpha-D-glucosamine 1-phosphate from alpha-D-glucosamine 6-phosphate (route II): step 2/2. The protein operates within nucleotide-sugar biosynthesis; UDP-N-acetyl-alpha-D-glucosamine biosynthesis; UDP-N-acetyl-alpha-D-glucosamine from N-acetyl-alpha-D-glucosamine 1-phosphate: step 1/1. Its pathway is bacterial outer membrane biogenesis; LPS lipid A biosynthesis. Catalyzes the last two sequential reactions in the de novo biosynthetic pathway for UDP-N-acetylglucosamine (UDP-GlcNAc). The C-terminal domain catalyzes the transfer of acetyl group from acetyl coenzyme A to glucosamine-1-phosphate (GlcN-1-P) to produce N-acetylglucosamine-1-phosphate (GlcNAc-1-P), which is converted into UDP-GlcNAc by the transfer of uridine 5-monophosphate (from uridine 5-triphosphate), a reaction catalyzed by the N-terminal domain. This Shewanella sp. (strain ANA-3) protein is Bifunctional protein GlmU.